The primary structure comprises 182 residues: Ribosome-recycling factor (182 aa).

Positions 136 to 156 are disordered; it reads IRKQEKNSDISKDESRDLQDK.

It belongs to the RRF family.

It localises to the cytoplasm. Functionally, responsible for the release of ribosomes from messenger RNA at the termination of protein biosynthesis. May increase the efficiency of translation by recycling ribosomes from one round of translation to another. This chain is Ribosome-recycling factor, found in Trichodesmium erythraeum (strain IMS101).